A 54-amino-acid polypeptide reads, in one-letter code: Defensin-like protein 1 (54 aa).

Intrachain disulfides connect Cys6/Cys54, Cys17/Cys39, Cys23/Cys48, and Cys27/Cys50.

Belongs to the DEFL family.

Its subcellular location is the secreted. Possesses antifungal activity insensitive to inorganic cations. Causes germ tubes and hyphae to swell and form multiple hyphal buds. Binds to the plasma membrane of the fungus. Has no inhibitory effect on insect gut alpha-amylase. The sequence is that of Defensin-like protein 1 from Heuchera sanguinea (Coralbells).